The sequence spans 533 residues: Probable nucleolar protein 5-1 (533 aa).

The Nop domain occupies 280–398; the sequence is IAPNLTALVG…LEARLRTLEG (119 aa). The tract at residues 402 to 533 is disordered; it reads GRLSGSAKGK…EKKKKKKTEV (132 aa). Positions 412 to 423 are enriched in basic and acidic residues; the sequence is PKIEVYDKDKKK. Over residues 433-450 the composition is skewed to polar residues; the sequence is KTYNTAADSLLQTPTVDS. Basic and acidic residues-rich tracts occupy residues 474 to 489 and 515 to 524; these read TEEP…KTEA and MPAKKKEKSE.

The protein belongs to the NOP5/NOP56 family.

Its subcellular location is the nucleus. It is found in the nucleolus. Its function is as follows. Required for 60S ribosomal subunit biogenesis. The polypeptide is Probable nucleolar protein 5-1 (NOP5-1) (Arabidopsis thaliana (Mouse-ear cress)).